Here is a 431-residue protein sequence, read N- to C-terminus: Glutamate-1-semialdehyde 2,1-aminomutase (431 aa).

At lysine 269 the chain carries N6-(pyridoxal phosphate)lysine.

The protein belongs to the class-III pyridoxal-phosphate-dependent aminotransferase family. HemL subfamily. As to quaternary structure, homodimer. The cofactor is pyridoxal 5'-phosphate.

It localises to the cytoplasm. It catalyses the reaction (S)-4-amino-5-oxopentanoate = 5-aminolevulinate. It functions in the pathway porphyrin-containing compound metabolism; protoporphyrin-IX biosynthesis; 5-aminolevulinate from L-glutamyl-tRNA(Glu): step 2/2. It participates in porphyrin-containing compound metabolism; chlorophyll biosynthesis. The chain is Glutamate-1-semialdehyde 2,1-aminomutase from Chlorobaculum parvum (strain DSM 263 / NCIMB 8327) (Chlorobium vibrioforme subsp. thiosulfatophilum).